We begin with the raw amino-acid sequence, 369 residues long: 3-dehydroquinate synthase (369 aa).

Residues 75-80, 109-113, 133-134, Lys146, Lys155, and 173-176 contribute to the NAD(+) site; these read DGEEHK, GVIGD, TT, and TLKT. Zn(2+) contacts are provided by Glu188, His251, and His268.

Belongs to the sugar phosphate cyclases superfamily. Dehydroquinate synthase family. Co(2+) serves as cofactor. It depends on Zn(2+) as a cofactor. The cofactor is NAD(+).

The protein localises to the cytoplasm. The catalysed reaction is 7-phospho-2-dehydro-3-deoxy-D-arabino-heptonate = 3-dehydroquinate + phosphate. The protein operates within metabolic intermediate biosynthesis; chorismate biosynthesis; chorismate from D-erythrose 4-phosphate and phosphoenolpyruvate: step 2/7. Its function is as follows. Catalyzes the conversion of 3-deoxy-D-arabino-heptulosonate 7-phosphate (DAHP) to dehydroquinate (DHQ). The chain is 3-dehydroquinate synthase from Legionella pneumophila subsp. pneumophila (strain Philadelphia 1 / ATCC 33152 / DSM 7513).